Consider the following 304-residue polypeptide: Non-specific ribonucleoside hydrolase RihC (304 aa).

His-235 is a catalytic residue.

Belongs to the IUNH family. RihC subfamily.

In terms of biological role, hydrolyzes both purine and pyrimidine ribonucleosides with a broad-substrate specificity. In Salmonella paratyphi A (strain ATCC 9150 / SARB42), this protein is Non-specific ribonucleoside hydrolase RihC.